We begin with the raw amino-acid sequence, 202 residues long: GTP cyclohydrolase 1 (202 aa).

Zn(2+) is bound by residues Cys90, His93, and Cys163.

The protein belongs to the GTP cyclohydrolase I family. In terms of assembly, toroid-shaped homodecamer, composed of two pentamers of five dimers.

It catalyses the reaction GTP + H2O = 7,8-dihydroneopterin 3'-triphosphate + formate + H(+). It functions in the pathway cofactor biosynthesis; 7,8-dihydroneopterin triphosphate biosynthesis; 7,8-dihydroneopterin triphosphate from GTP: step 1/1. The chain is GTP cyclohydrolase 1 (folE) from Mycobacterium bovis (strain ATCC BAA-935 / AF2122/97).